The sequence spans 434 residues: Chaperone SurA (434 aa).

The signal sequence occupies residues 1–29; that stretch reads MKTLRLNFRSAILKALGALLLLQGCLAHA. 2 consecutive PpiC domains span residues 180 to 281 and 290 to 389; these read AEEY…AMLE and VEQS…QVQD.

It is found in the periplasm. It carries out the reaction [protein]-peptidylproline (omega=180) = [protein]-peptidylproline (omega=0). Chaperone involved in the correct folding and assembly of outer membrane proteins. Recognizes specific patterns of aromatic residues and the orientation of their side chains, which are found more frequently in integral outer membrane proteins. May act in both early periplasmic and late outer membrane-associated steps of protein maturation. The polypeptide is Chaperone SurA (Hahella chejuensis (strain KCTC 2396)).